The primary structure comprises 402 residues: Multidrug resistance protein MdtH (402 aa).

The next 11 helical transmembrane spans lie at tyrosine 13–isoleucine 33, alanine 45–phenylalanine 65, proline 99–phenylalanine 116, leucine 139–leucine 159, leucine 165–leucine 185, valine 214–methionine 234, alanine 244–alanine 264, leucine 277–leucine 297, leucine 300–serine 322, leucine 340–glycine 360, and leucine 368–phenylalanine 388.

It belongs to the major facilitator superfamily. DHA1 family. MdtH (TC 2.A.1.2.21) subfamily.

The protein resides in the cell inner membrane. The sequence is that of Multidrug resistance protein MdtH from Citrobacter koseri (strain ATCC BAA-895 / CDC 4225-83 / SGSC4696).